Here is a 381-residue protein sequence, read N- to C-terminus: Cytochrome P450 105C1 (381 aa).

Residue cysteine 330 participates in heme binding.

This sequence belongs to the cytochrome P450 family. The cofactor is heme.

It localises to the cytoplasm. The protein is Cytochrome P450 105C1 (cyp105C1) of Streptomyces sp.